A 270-amino-acid chain; its full sequence is uncharacterized protein (270 aa).

This is an uncharacterized protein from Methanocaldococcus jannaschii (strain ATCC 43067 / DSM 2661 / JAL-1 / JCM 10045 / NBRC 100440) (Methanococcus jannaschii).